The sequence spans 385 residues: cAMP-dependent protein kinase regulatory subunit (385 aa).

Residues 1-22 (MSSTGFTSPFGNANPFGSSGRS) are compositionally biased toward polar residues. Disordered stretches follow at residues 1 to 51 (MSST…GVKN) and 77 to 111 (DFPA…PVHP). Positions 1 to 128 (MSSTGFTSPF…RLKKAISGNF (128 aa)) are dimerization and phosphorylation. Ser-89 is modified (phosphoserine). 3',5'-cyclic AMP contacts are provided by residues 129–260 (LFNH…EEVP), Glu-207, Arg-216, 261–378 (ILKT…EAEE), Glu-328, and Arg-337.

The protein belongs to the cAMP-dependent kinase regulatory chain family. In terms of assembly, tetramer, composed of 2 regulatory (R) and 2 catalytic (C) subunits. In the presence of cAMP it dissociates into 2 active monomeric C subunits and an R dimer.

The polypeptide is cAMP-dependent protein kinase regulatory subunit (mcb) (Neurospora crassa (strain ATCC 24698 / 74-OR23-1A / CBS 708.71 / DSM 1257 / FGSC 987)).